We begin with the raw amino-acid sequence, 57 residues long: Granulin-1 (57 aa).

2 disulfides stabilise this stretch: cysteine 4/cysteine 16 and cysteine 10/cysteine 26.

Belongs to the granulin family. In terms of processing, granulins are disulfide bridged. In terms of tissue distribution, ubiquitous.

Its subcellular location is the secreted. Functionally, granulins have possible cytokine-like activity. They may play a role in inflammation, wound repair, and tissue remodeling. This chain is Granulin-1, found in Cyprinus carpio (Common carp).